We begin with the raw amino-acid sequence, 306 residues long: Homoserine O-acetyltransferase (306 aa).

Cys142 functions as the Acyl-thioester intermediate in the catalytic mechanism. The substrate site is built by Lys163 and Ser194. His237 serves as the catalytic Proton acceptor. Glu239 is a catalytic residue. Arg251 is a substrate binding site.

This sequence belongs to the MetA family.

It is found in the cytoplasm. The enzyme catalyses L-homoserine + acetyl-CoA = O-acetyl-L-homoserine + CoA. It functions in the pathway amino-acid biosynthesis; L-methionine biosynthesis via de novo pathway; O-acetyl-L-homoserine from L-homoserine: step 1/1. Transfers an acetyl group from acetyl-CoA to L-homoserine, forming acetyl-L-homoserine. The sequence is that of Homoserine O-acetyltransferase from Clostridium tetani (strain Massachusetts / E88).